The primary structure comprises 352 residues: Mitochondrial ubiquitin ligase activator of NFKB 1 (352 aa).

The Cytoplasmic portion of the chain corresponds to 1–8 (MESGGRPS). The chain crosses the membrane as a helical span at residues 9 to 29 (LCQFILLGTTSVVTAALYSVY). Topologically, residues 30–238 (RQKARVSQEL…LLQRQESSVR (209 aa)) are mitochondrial intermembrane. Lysine 52 participates in a covalent cross-link: Glycyl lysine isopeptide (Lys-Gly) (interchain with G-Cter in ubiquitin). Residues 239–259 (LWKVLALVFGFATCATLFFIL) form a helical membrane-spanning segment. The Cytoplasmic segment spans residues 260–352 (RKQYLQRQER…ITRVIPLYNS (93 aa)). Glycyl lysine isopeptide (Lys-Gly) (interchain with G-Cter in ubiquitin) cross-links involve residues lysine 273 and lysine 299. Residues 302-340 (CVVCLSSFKSCVFLECGHVCSCTECYRALPEPKKCPICR) form an RING-type zinc finger.

Homooligomer. Interacts with MAP3K7/TAK1. Interacts with UBC9. Interacts with and sumoylates DNM1L. Interacts with MAVS. Interacts with TP53 (via N-terminus); the interaction leads to ubiquitination and proteasomal degradation of TP53. Ubiquitinated by PRKN during mitophagy, leading to its degradation and enhancement of mitophagy. Deubiquitinated by USP30. In terms of tissue distribution, widely expressed with highest levels in the heart, skeletal muscle, placenta, kidney and liver. Barely detectable in colon and thymus.

It is found in the mitochondrion outer membrane. The protein resides in the peroxisome. The catalysed reaction is S-ubiquitinyl-[E2 ubiquitin-conjugating enzyme]-L-cysteine + [acceptor protein]-L-lysine = [E2 ubiquitin-conjugating enzyme]-L-cysteine + N(6)-ubiquitinyl-[acceptor protein]-L-lysine.. The protein operates within protein modification; protein ubiquitination. It participates in protein modification; protein sumoylation. Its function is as follows. Exhibits weak E3 ubiquitin-protein ligase activity. E3 ubiquitin ligases accept ubiquitin from an E2 ubiquitin-conjugating enzyme in the form of a thioester and then directly transfer the ubiquitin to targeted substrates. Can ubiquitinate AKT1 preferentially at 'Lys-284' involving 'Lys-48'-linked polyubiquitination and seems to be involved in regulation of Akt signaling by targeting phosphorylated Akt to proteasomal degradation. Mediates polyubiquitination of cytoplasmic TP53 at 'Lys-24' which targets TP53 for proteasomal degradation, thus reducing TP53 levels in the cytoplasm and mitochondrion. Proposed to preferentially act as a SUMO E3 ligase at physiological concentrations. Plays a role in the control of mitochondrial morphology by promoting mitochondrial fragmentation, and influences mitochondrial localization. Likely to promote mitochondrial fission through negatively regulating the mitochondrial fusion proteins MFN1 and MFN2, acting in a pathway that is parallel to the PRKN/PINK1 regulatory pathway. May also be involved in the sumoylation of the membrane fission protein DNM1L. Inhibits cell growth. When overexpressed, activates JNK through MAP3K7/TAK1 and induces caspase-dependent apoptosis. Involved in the modulation of innate immune defense against viruses by inhibiting RIGI-dependent antiviral response. Can mediate RIGI sumoylation and disrupt its polyubiquitination. This Homo sapiens (Human) protein is Mitochondrial ubiquitin ligase activator of NFKB 1 (MUL1).